Consider the following 405-residue polypeptide: Bifunctional enzyme IspD/IspF (405 aa).

Residues 1-246 (MLQMPSKQPI…KLSASLLPDV (246 aa)) are 2-C-methyl-D-erythritol 4-phosphate cytidylyltransferase. Residues 247 to 405 (RTGNGYDVHQ…TATVVYRGRT (159 aa)) form a 2-C-methyl-D-erythritol 2,4-cyclodiphosphate synthase region. The a divalent metal cation site is built by aspartate 253 and histidine 255. 4-CDP-2-C-methyl-D-erythritol 2-phosphate is bound by residues 253–255 (DVH) and 279–280 (HS). Histidine 287 contacts a divalent metal cation. 4-CDP-2-C-methyl-D-erythritol 2-phosphate is bound by residues 301–303 (DIG), 377–380 (TTNE), phenylalanine 384, and arginine 387.

The protein in the N-terminal section; belongs to the IspD/TarI cytidylyltransferase family. IspD subfamily. It in the C-terminal section; belongs to the IspF family. The cofactor is a divalent metal cation.

The catalysed reaction is 2-C-methyl-D-erythritol 4-phosphate + CTP + H(+) = 4-CDP-2-C-methyl-D-erythritol + diphosphate. It catalyses the reaction 4-CDP-2-C-methyl-D-erythritol 2-phosphate = 2-C-methyl-D-erythritol 2,4-cyclic diphosphate + CMP. It participates in isoprenoid biosynthesis; isopentenyl diphosphate biosynthesis via DXP pathway; isopentenyl diphosphate from 1-deoxy-D-xylulose 5-phosphate: step 2/6. Its pathway is isoprenoid biosynthesis; isopentenyl diphosphate biosynthesis via DXP pathway; isopentenyl diphosphate from 1-deoxy-D-xylulose 5-phosphate: step 4/6. In terms of biological role, bifunctional enzyme that catalyzes the formation of 4-diphosphocytidyl-2-C-methyl-D-erythritol from CTP and 2-C-methyl-D-erythritol 4-phosphate (MEP) (IspD), and catalyzes the conversion of 4-diphosphocytidyl-2-C-methyl-D-erythritol 2-phosphate (CDP-ME2P) to 2-C-methyl-D-erythritol 2,4-cyclodiphosphate (ME-CPP) with a corresponding release of cytidine 5-monophosphate (CMP) (IspF). The protein is Bifunctional enzyme IspD/IspF of Rhizobium etli (strain CIAT 652).